Reading from the N-terminus, the 400-residue chain is MTQFASPVLHSLLDTDAYKLHMQQAVFHHYYDVHVAAEFRCRGDDLLGIYADAIREQVQAMQHLRLQDDEYQWLSALPFFKADYLNWLREFRFNPEQVTVSNDNGKLDIRLSGPWREVILWEVPLLAVISEMVHRYRSPQADVAQALDTLESKLVDFSALTAGLDMSRFHLMDFGTRRRFSREVQETIVKRLQQESWFVGTSNYDLARRLSLTPMGTQAHEWFQAHQQISPDLANSQRAALAAWLEEYPDQLGIALTDCITMDAFLRDFGVEFASRYQGLRHDSGDPVEWGEKAIAHYEKLGIDPQSKTLVFSDNLDLRKAVELYRHFSSRVQLSFGIGTRLTCDIPQVKPLNIVIKLVECNGKPVAKLSDSPGKTICHDKAFVRALRKAFDLPHIKKAS.

Residue H220 is modified to Phosphohistidine; by autocatalysis.

Belongs to the NAPRTase family. In terms of processing, transiently phosphorylated on a His residue during the reaction cycle. Phosphorylation strongly increases the affinity for substrates and increases the rate of nicotinate D-ribonucleotide production. Dephosphorylation regenerates the low-affinity form of the enzyme, leading to product release.

The catalysed reaction is nicotinate + 5-phospho-alpha-D-ribose 1-diphosphate + ATP + H2O = nicotinate beta-D-ribonucleotide + ADP + phosphate + diphosphate. It participates in cofactor biosynthesis; NAD(+) biosynthesis; nicotinate D-ribonucleotide from nicotinate: step 1/1. Its function is as follows. Catalyzes the synthesis of beta-nicotinate D-ribonucleotide from nicotinate and 5-phospho-D-ribose 1-phosphate at the expense of ATP. This Escherichia coli (strain K12 / MC4100 / BW2952) protein is Nicotinate phosphoribosyltransferase.